Reading from the N-terminus, the 372-residue chain is Beta-1,3-N-acetylglucosaminyltransferase radical fringe (372 aa).

The Cytoplasmic segment spans residues 1-10; the sequence is MNSSCLGLRR. A helical; Signal-anchor for type II membrane protein membrane pass occupies residues 11-27; the sequence is TCFLLSVTAAAVLLLLL. The Lumenal segment spans residues 28–372; the sequence is PRGQPPAAPR…TIWCPNKKMS (345 aa). A compositionally biased stretch (pro residues) spans 30 to 48; the sequence is GQPPAAPRRRPPPAGPSRP. The tract at residues 30–96 is disordered; sequence GQPPAAPRRR…RVRMGPPGGS (67 aa). Gly residues predominate over residues 64-78; that stretch reads DRGGGSGAAGGGRGV. Residue Arg120 participates in substrate binding. The N-linked (GlcNAc...) asparagine glycan is linked to Asn159. Intrachain disulfides connect Cys160–Cys171 and Cys189–Cys253. Asp193 provides a ligand contact to substrate. Asp194 provides a ligand contact to Mn(2+). Residue Asp283 is part of the active site. Mn(2+) is bound at residue His307. The cysteines at positions 357 and 366 are disulfide-linked.

The protein belongs to the glycosyltransferase 31 family. Requires Mn(2+) as cofactor.

The protein localises to the golgi apparatus membrane. The catalysed reaction is 3-O-(alpha-L-fucosyl)-L-threonyl-[EGF-like domain protein] + UDP-N-acetyl-alpha-D-glucosamine = 3-O-(N-acetyl-beta-D-glucosaminyl-(1-&gt;3)-alpha-L-fucosyl)-L-threonyl-[EGF-like domain protein] + UDP + H(+). The enzyme catalyses 3-O-(alpha-L-fucosyl)-L-seryl-[EGF-like domain protein] + UDP-N-acetyl-alpha-D-glucosamine = 3-O-(N-acetyl-beta-D-glucosaminyl-(1-&gt;3)-alpha-L-fucosyl)-L-seryl-[EGF-like domain protein] + UDP + H(+). Glycosyltransferase that initiates the elongation of O-linked fucose residues attached to EGF-like repeats in the extracellular domain of Notch molecules. Plays an important role in limb outgrowth, it directs the formation and positioning of the apical ectodermal ridge (AER), one of the key organizer centers of vertebrate limb development. The chain is Beta-1,3-N-acetylglucosaminyltransferase radical fringe (RFNG) from Gallus gallus (Chicken).